An 86-amino-acid chain; its full sequence is Large ribosomal subunit protein eL20 (86 aa).

It belongs to the eukaryotic ribosomal protein eL20 family. Part of the 50S ribosomal subunit. Binds 23S rRNA.

In Saccharolobus islandicus (strain Y.N.15.51 / Yellowstone #2) (Sulfolobus islandicus), this protein is Large ribosomal subunit protein eL20.